We begin with the raw amino-acid sequence, 289 residues long: Phosphatidylglycerol--prolipoprotein diacylglyceryl transferase (289 aa).

The next 7 membrane-spanning stretches (helical) occupy residues 17–37 (LAVRWYGLMYLLGFACFILLG), 57–77 (MLFYGVLGVIVGGRLGHIFFY), 89–109 (IFAVWQGGMSFHGGFLGVIAA), 121–141 (WLVVTDFIAPLVPLGLGAGRI), 174–194 (QLYEFALEGLAFFTLMWIYSA), 200–220 (GAVSGMFLIGYGVFRSFAEFF), and 235–255 (ISMGQWLSLPMILAGVIMLVW). Position 140 (arginine 140) interacts with a 1,2-diacyl-sn-glycero-3-phospho-(1'-sn-glycerol).

This sequence belongs to the Lgt family.

Its subcellular location is the cell inner membrane. The enzyme catalyses L-cysteinyl-[prolipoprotein] + a 1,2-diacyl-sn-glycero-3-phospho-(1'-sn-glycerol) = an S-1,2-diacyl-sn-glyceryl-L-cysteinyl-[prolipoprotein] + sn-glycerol 1-phosphate + H(+). The protein operates within protein modification; lipoprotein biosynthesis (diacylglyceryl transfer). Catalyzes the transfer of the diacylglyceryl group from phosphatidylglycerol to the sulfhydryl group of the N-terminal cysteine of a prolipoprotein, the first step in the formation of mature lipoproteins. This is Phosphatidylglycerol--prolipoprotein diacylglyceryl transferase from Nitrosospira multiformis (strain ATCC 25196 / NCIMB 11849 / C 71).